Consider the following 281-residue polypeptide: Non-selective voltage-gated ion channel 2 (281 aa).

The ATP site is built by arginine 11 and arginine 19.

It belongs to the eukaryotic mitochondrial porin family.

Its subcellular location is the mitochondrion outer membrane. Its function is as follows. Non-selective voltage-gated ion channel that mediates the transport of anions and cations through the mitochondrion outer membrane. The channel adopts an open conformation at low or zero membrane potential and a closed conformation at potentials above 30-40 mV. The open state has a weak anion selectivity whereas the closed state is cation-selective. Does not confer permeability to NADH. Functionally, catalyzes the scrambling of phospholipids across the outer mitochondrial membrane; the mechanism is unrelated to channel activity and is capable of translocating both anionic and zwitterionic phospholipids. This is Non-selective voltage-gated ion channel 2 (POR2) from Saccharomyces cerevisiae (strain ATCC 204508 / S288c) (Baker's yeast).